The chain runs to 328 residues: 2-oxoglutarate-dependent dioxygenase gloE (328 aa).

Residues 170–271 (TRTNLTFLKY…RYTLAYFLRP (102 aa)) form the Fe2OG dioxygenase domain. Fe cation contacts are provided by His-194, Asp-196, and His-249. 2-oxoglutarate is bound at residue Arg-262.

This sequence belongs to the iron/ascorbate-dependent oxidoreductase family. It depends on Fe(2+) as a cofactor.

The protein operates within mycotoxin biosynthesis. Functionally, 2-oxoglutarate-dependent dioxygenase; part of the gene cluster that mediates the biosynthesis of pneumocandins, lipohexapeptides of the echinocandin family that prevent fungal cell wall formation by non-competitive inhibition of beta-1,3-glucan synthase. The 10,12-dimethylmyristoyl side chain is synthesized by the reducing polyketide synthase gloL/GLPKS4. The thioesterase gloN/GLHYD exclusively interacts with gloL/GLPKS4 to maintain turnover of the polyketide side chain. The 10R,12S-dimethylmyristic acid is then transferred to the first thiolation domain of the nonribosomal peptide synthetase gloA/GLNRPS4 by the acyl-AMP ligase gloD/GLligase, followed by its acylation to L-ornithine to trigger elongation of the cyclic hexapeptide. L-ornithine, 4R-hydroxyl-L-proline (generated from L-proline by the dioxygenase gloF/GLOXY2), 3S-hydroxyl-L-homotyrosine (generated by gloG/GLHtyB, gloH/GLHtyA, gloI/GLHtyC, gloJ/GLHtyD and hydroxylated at C-3 by the dioxygenase gloM/GLOXY1), 3R-hydroxyl-L-glutamine (generated from L-glutamine probably by the dioxygenase gloE/GLOXY3) and 3S-hydroxyl-L-proline (generated from L-proline by the dioxygenase gloF/GLOXY2 to yield pneumocandin B0), or 3S-hydroxyl-4S-methyl-L-proline (generated from L-leucine by the dioxygenase gloC/GLOXY4 to yield pneumocandin A0) are sequentially added to the growing chain. The last C domain of gloA/GLNRPS4 is proposed to be responsible for cyclization by condensation to form the peptide bond between L-ornithine and 3S-hydroxyl-4S-methyl-L-proline (for pneumocandin A0) or 3S-hydroxyl-L-proline (for pneumocandin B0). Finally, the subsequent C-4 hydroxylation of 3S-hydroxyl-L-homotyrosine and L-ornithine dihydroxylation at C-4 and C-5 are performed by the cytochrome P450 monooxygenases gloP/GLP450-1 and gloO/GLP450-2, respectively. This Glarea lozoyensis (strain ATCC 20868 / MF5171) protein is 2-oxoglutarate-dependent dioxygenase gloE.